The sequence spans 351 residues: uncharacterized protein (351 aa).

Mn(2+) is bound by residues Asp215, Asp226, His290, Glu319, and Glu333.

Belongs to the peptidase M24B family. Mn(2+) serves as cofactor.

This is an uncharacterized protein from Staphylococcus epidermidis (strain ATCC 35984 / DSM 28319 / BCRC 17069 / CCUG 31568 / BM 3577 / RP62A).